A 695-amino-acid polypeptide reads, in one-letter code: MALLLVSLLAFLSLGSGCHHRICHCSNRVFLCQESKVTEIPSDLPRNAIELRFVLTKLRVIQKGAFSGFGDLEKIEISQNDVLEVIEADVFSNLPKLHEIRIEKANNLLYINPEAFQNLPNLQYLLISNTGIKHLPDVHKIHSLQKVLLDIQDNINIHTIERNSFVGLSFESVILWLNKNGIQEIHNCAFNGTQLDELNLSDNNNLEELPNDVFHGASGPVILDISRTRIHSLPSYGLENLKKLRARSTYNLKKLPTLEKLVALMEASLTYPSHCCAFANWRRQISELHPICNKSILRQEVDYMTQARGQRSSLAEDNESSYSRGFDMTYTEFDYDLCNEVVDVTCSPKPDAFNPCEDIMGYNILRVLIWFISILAITGNIIVLVILTTSQYKLTVPRFLMCNLAFADLCIGIYLLLIASVDIHTKSQYHNYAIDWQTGAGCDAAGFFTVFASELSVYTLTAITLERWHTITHAMQLDCKVQLRHAASVMVMGWIFAFAAALFPIFGISSYMKVSICLPMDIDSPLSQLYVMSLLVLNVLAFVVICGCYIHIYLTVRNPNIVSSSSDTRIAKRMAMLIFTDFLCMAPISFFAISASLKVPLITVSKAKILLVLFHPINSCANPFLYAIFTKNFRRDFFILLSKCGCYEMQAQIYRTETSSTVHNTHPRNGHCSSAPRVTSGSTYILVPLSHLAQN.

The signal sequence occupies residues 1–17 (MALLLVSLLAFLSLGSG). 2 disulfides stabilise this stretch: C18-C25 and C23-C32. In terms of domain architecture, LRRNT spans 18 to 46 (CHHRICHCSNRVFLCQESKVTEIPSDLPR). Residues 18-366 (CHHRICHCSN…EDIMGYNILR (349 aa)) lie on the Extracellular side of the membrane. LRR repeat units follow at residues 49–72 (IELR…FGDL), 73–97 (EKIE…LPKL), 98–118 (HEIR…AFQN), 119–143 (LPNL…KIHS), 144–169 (LQKV…VGLS), 170–192 (FESV…AFNG), 193–216 (TQLD…VFHG), 217–240 (ASGP…GLEN), and 241–259 (LKKL…PTLE). N-linked (GlcNAc...) asparagine glycosylation is found at N191 and N199. Disulfide bonds link C275/C346, C276/C292, C276/C356, and C292/C338. Residues N293 and N318 are each glycosylated (N-linked (GlcNAc...) asparagine). Y335 carries the post-translational modification Sulfotyrosine. The chain crosses the membrane as a helical span at residues 367 to 387 (VLIWFISILAITGNIIVLVIL). Residues 388–398 (TTSQYKLTVPR) are Cytoplasmic-facing. Residues 399–421 (FLMCNLAFADLCIGIYLLLIASV) form a helical membrane-spanning segment. The Extracellular portion of the chain corresponds to 422–443 (DIHTKSQYHNYAIDWQTGAGCD). C442 and C517 are disulfide-bonded. The chain crosses the membrane as a helical span at residues 444 to 465 (AAGFFTVFASELSVYTLTAITL). At 466–485 (ERWHTITHAMQLDCKVQLRH) the chain is on the cytoplasmic side. A helical transmembrane segment spans residues 486-508 (AASVMVMGWIFAFAAALFPIFGI). Topologically, residues 509–528 (SSYMKVSICLPMDIDSPLSQ) are extracellular. The helical transmembrane segment at 529–550 (LYVMSLLVLNVLAFVVICGCYI) threads the bilayer. The Cytoplasmic portion of the chain corresponds to 551–573 (HIYLTVRNPNIVSSSSDTRIAKR). The helical transmembrane segment at 574–597 (MAMLIFTDFLCMAPISFFAISASL) threads the bilayer. Over 598 to 608 (KVPLITVSKAK) the chain is Extracellular. A helical membrane pass occupies residues 609–630 (ILLVLFHPINSCANPFLYAIFT). The Cytoplasmic portion of the chain corresponds to 631-695 (KNFRRDFFIL…LVPLSHLAQN (65 aa)).

This sequence belongs to the G-protein coupled receptor 1 family. FSH/LSH/TSH subfamily. In terms of assembly, homotrimer. Functions as a homotrimer binding the FSH hormone heterodimer composed of CGA and FSHB. Interacts with ARRB2. Interacts with APPL2; interaction is independent of follicle stimulating hormone stimulation. Post-translationally, sulfated. In terms of processing, N-glycosylated; indirectly required for FSH-binding, possibly via a conformational change that allows high affinity binding of hormone. In terms of tissue distribution, sertoli cells and ovarian granulosa cells.

It localises to the cell membrane. G protein-coupled receptor for follitropin, the follicle-stimulating hormone. Through cAMP production activates the downstream PI3K-AKT and ERK1/ERK2 signaling pathways. The protein is Follicle-stimulating hormone receptor (FSHR) of Homo sapiens (Human).